The primary structure comprises 91 residues: DNA-binding protein HU (91 aa).

Belongs to the bacterial histone-like protein family.

Histone-like DNA-binding protein which is capable of wrapping DNA to stabilize it, and thus to prevent its denaturation under extreme environmental conditions. Also seems to act as a fortuitous virulence factor in delayed sequelae by binding to heparan sulfate-proteoglycans in the extracellular matrix of target organs and acting as a nidus for in situ immune complex formation. This Streptococcus pyogenes serotype M1 protein is DNA-binding protein HU (hup).